An 86-amino-acid chain; its full sequence is DNA-directed RNA polymerase subunit omega (86 aa).

It belongs to the RNA polymerase subunit omega family. The RNAP catalytic core consists of 2 alpha, 1 beta, 1 beta' and 1 omega subunit. When a sigma factor is associated with the core the holoenzyme is formed, which can initiate transcription.

It catalyses the reaction RNA(n) + a ribonucleoside 5'-triphosphate = RNA(n+1) + diphosphate. Its function is as follows. Promotes RNA polymerase assembly. Latches the N- and C-terminal regions of the beta' subunit thereby facilitating its interaction with the beta and alpha subunits. The chain is DNA-directed RNA polymerase subunit omega from Agathobacter rectalis (strain ATCC 33656 / DSM 3377 / JCM 17463 / KCTC 5835 / VPI 0990) (Eubacterium rectale).